Consider the following 247-residue polypeptide: MFYLLNSIIMNDVPTPYGMYFQDSATPNQEGILELHDNIMFYLFIILGLVSWLLFTIVRTYSKNPIAYKYIKHGQTIEIIWTIFPAVILLIIAFPSFILLYLCDEVISPAMTIKAIGLQWYWKYEYSDFINDNGETVEFESYVIPEDLLEDGQLRLLDTDTSVVVPVDTHIRFVVTAADVIHDFAVPSLGIKIDAAPGRLNQVSALIQREGVFYGQCSEICGQSHSAMPIKIEAVSLPAFLEWLNEQ.

An N-terminal signal peptide occupies residues 1–11; the sequence is MFYLLNSIIMN. Topologically, residues 12–38 are mitochondrial intermembrane; it reads DVPTPYGMYFQDSATPNQEGILELHDN. Residues 39 to 59 form a helical membrane-spanning segment; the sequence is IMFYLFIILGLVSWLLFTIVR. Residues 60-78 are Mitochondrial matrix-facing; it reads TYSKNPIAYKYIKHGQTIE. A helical membrane pass occupies residues 79–101; it reads IIWTIFPAVILLIIAFPSFILLY. Residues 102–247 are Mitochondrial intermembrane-facing; the sequence is LCDEVISPAM…PAFLEWLNEQ (146 aa). Residues histidine 182, cysteine 217, glutamate 219, cysteine 221, histidine 225, and methionine 228 each contribute to the Cu cation site. Position 219 (glutamate 219) interacts with Mg(2+).

Belongs to the cytochrome c oxidase subunit 2 family. In terms of assembly, component of the cytochrome c oxidase (complex IV, CIV), a multisubunit enzyme composed of a catalytic core of 3 subunits and several supernumerary subunits. The complex exists as a monomer or a dimer and forms supercomplexes (SCs) in the inner mitochondrial membrane with ubiquinol-cytochrome c oxidoreductase (cytochrome b-c1 complex, complex III, CIII). The cofactor is Cu cation. In terms of processing, the signal sequence of COX2 is processed by IMP1.

It is found in the mitochondrion inner membrane. It carries out the reaction 4 Fe(II)-[cytochrome c] + O2 + 8 H(+)(in) = 4 Fe(III)-[cytochrome c] + 2 H2O + 4 H(+)(out). Its function is as follows. Component of the cytochrome c oxidase, the last enzyme in the mitochondrial electron transport chain which drives oxidative phosphorylation. The respiratory chain contains 3 multisubunit complexes succinate dehydrogenase (complex II, CII), ubiquinol-cytochrome c oxidoreductase (cytochrome b-c1 complex, complex III, CIII) and cytochrome c oxidase (complex IV, CIV), that cooperate to transfer electrons derived from NADH and succinate to molecular oxygen, creating an electrochemical gradient over the inner membrane that drives transmembrane transport and the ATP synthase. Cytochrome c oxidase is the component of the respiratory chain that catalyzes the reduction of oxygen to water. Electrons originating from reduced cytochrome c in the intermembrane space (IMS) are transferred via the dinuclear copper A center (CU(A)) of subunit 2 and heme A of subunit 1 to the active site in subunit 1, a binuclear center (BNC) formed by heme A3 and copper B (CU(B)). The BNC reduces molecular oxygen to 2 water molecules using 4 electrons from cytochrome c in the IMS and 4 protons from the mitochondrial matrix. This chain is Cytochrome c oxidase subunit 2 (COX2), found in Kluyveromyces lactis (strain ATCC 8585 / CBS 2359 / DSM 70799 / NBRC 1267 / NRRL Y-1140 / WM37) (Yeast).